Here is a 527-residue protein sequence, read N- to C-terminus: Probable protein kinase UbiB (527 aa).

The 405-residue stretch at 123–527 (EFNETALASA…AIWLLIYLLS (405 aa)) folds into the Protein kinase domain. Residues 129–137 (LASASIAQV) and Lys-161 contribute to the ATP site. Asp-296 acts as the Proton acceptor in catalysis. A helical transmembrane segment spans residues 506–526 (FTSFILGLCTGLAIWLLIYLL).

Belongs to the ABC1 family. UbiB subfamily.

The protein localises to the cell inner membrane. It functions in the pathway cofactor biosynthesis; ubiquinone biosynthesis [regulation]. Its function is as follows. Is probably a protein kinase regulator of UbiI activity which is involved in aerobic coenzyme Q (ubiquinone) biosynthesis. This Pasteurella multocida (strain Pm70) protein is Probable protein kinase UbiB.